Here is a 196-residue protein sequence, read N- to C-terminus: Imidazoleglycerol-phosphate dehydratase (196 aa).

It belongs to the imidazoleglycerol-phosphate dehydratase family.

It localises to the cytoplasm. It catalyses the reaction D-erythro-1-(imidazol-4-yl)glycerol 3-phosphate = 3-(imidazol-4-yl)-2-oxopropyl phosphate + H2O. The protein operates within amino-acid biosynthesis; L-histidine biosynthesis; L-histidine from 5-phospho-alpha-D-ribose 1-diphosphate: step 6/9. This chain is Imidazoleglycerol-phosphate dehydratase, found in Ralstonia nicotianae (strain ATCC BAA-1114 / GMI1000) (Ralstonia solanacearum).